An 864-amino-acid chain; its full sequence is Mitochondrial 15S rRNA processing factor CCM1 (864 aa).

The N-terminal 76 residues, 1–76 (MYMARCGPKN…REFSNTLKER (76 aa)), are a transit peptide targeting the mitochondrion. PPR repeat units lie at residues 319 to 353 (NKQN…STKH) and 356 to 390 (DICT…NIKP).

Belongs to the CCM1 family. In terms of assembly, binds to mitochondrial small subunit 15S rRNA.

It localises to the mitochondrion. In terms of biological role, regulates mitochondrial small subunit maturation by controlling 15S rRNA 5'-end processing. Localizes to the 5' precursor of the 15S rRNA in a position that is subsequently occupied by mS47 in the mature yeast mtSSU. Uses structure and sequence-specific RNA recognition, binding to a single-stranded region of the precursor and specifically recognizing bases -6 to -1. The exchange of Ccm1 for mS47 is coupled to the irreversible removal of precursor rRNA that is accompanied by conformational changes of the mitoribosomal proteins uS5m and mS26. These conformational changes signal completion of 5'-end rRNA processing through protection of the mature 5'-end of the 15S rRNA and stabilization of mS47. The removal of the 5' precursor together with the dissociation of Ccm1 may be catalyzed by the 5'-3' exoribonuclease Pet127. Involved in the specific removal of group I introns in mitochondrial encoded transcripts. This is Mitochondrial 15S rRNA processing factor CCM1 (CCM1) from Saccharomyces cerevisiae (strain RM11-1a) (Baker's yeast).